The following is a 345-amino-acid chain: Anthranilate phosphoribosyltransferase (345 aa).

5-phospho-alpha-D-ribose 1-diphosphate contacts are provided by residues Gly79, 82 to 83 (GD), Thr87, 89 to 92 (NVST), 106 to 114 (KHGNRAVSG), and Ser118. An anthranilate-binding site is contributed by Gly79. Ser91 contributes to the Mg(2+) binding site. Residue Asn109 participates in anthranilate binding. Arg164 is a binding site for anthranilate. Asp223 and Glu224 together coordinate Mg(2+).

The protein belongs to the anthranilate phosphoribosyltransferase family. As to quaternary structure, homodimer. Requires Mg(2+) as cofactor.

It catalyses the reaction N-(5-phospho-beta-D-ribosyl)anthranilate + diphosphate = 5-phospho-alpha-D-ribose 1-diphosphate + anthranilate. Its pathway is amino-acid biosynthesis; L-tryptophan biosynthesis; L-tryptophan from chorismate: step 2/5. Its function is as follows. Catalyzes the transfer of the phosphoribosyl group of 5-phosphorylribose-1-pyrophosphate (PRPP) to anthranilate to yield N-(5'-phosphoribosyl)-anthranilate (PRA). This is Anthranilate phosphoribosyltransferase from Saccharolobus islandicus (strain M.14.25 / Kamchatka #1) (Sulfolobus islandicus).